The sequence spans 309 residues: Thioredoxin reductase (309 aa).

Residue 35 to 42 participates in FAD binding; that stretch reads EKQFPGGK. Cys-134 and Cys-137 are joined by a disulfide. 277–286 contributes to the FAD binding site; the sequence is DIVDKNVRQI.

Belongs to the class-II pyridine nucleotide-disulfide oxidoreductase family. Homodimer. The cofactor is FAD.

Its subcellular location is the cytoplasm. It carries out the reaction [thioredoxin]-dithiol + NADP(+) = [thioredoxin]-disulfide + NADPH + H(+). In Ureaplasma parvum serovar 3 (strain ATCC 700970), this protein is Thioredoxin reductase (trxB).